A 418-amino-acid chain; its full sequence is Protein FAM53A (418 aa).

2 disordered regions span residues T198 to R236 and E248 to R269. Low complexity predominate over residues S205 to G229. Residues E248–E265 show a composition bias toward polar residues. The Nuclear localization signal signature appears at K285–R293.

It belongs to the FAM53 family.

The protein resides in the nucleus. Functionally, may play an important role in neural development; the dorsomedial roof of the third ventricle. This is Protein FAM53A from Gallus gallus (Chicken).